Here is a 229-residue protein sequence, read N- to C-terminus: Small ribosomal subunit protein uS3 (229 aa).

Positions 39–107 (VRQFLIKELK…PAQINISEVR (69 aa)) constitute a KH type-2 domain.

It belongs to the universal ribosomal protein uS3 family. Part of the 30S ribosomal subunit. Forms a tight complex with proteins S10 and S14.

Binds the lower part of the 30S subunit head. Binds mRNA in the 70S ribosome, positioning it for translation. The chain is Small ribosomal subunit protein uS3 from Photobacterium profundum (strain SS9).